The chain runs to 366 residues: Probable glucuronokinase 2 (366 aa).

126–136 (PRQTGLSGSSA) is a binding site for ATP. Asp-179 serves as the catalytic Proton acceptor.

It belongs to the GHMP kinase family. The cofactor is Mg(2+). Requires Mn(2+) as cofactor. It depends on Co(2+) as a cofactor.

The catalysed reaction is D-glucuronate + ATP = 1-phospho-alpha-D-glucuronate + ADP + H(+). Sugar-1-kinase with a strict substrate specificity for D-glucuronic acid and ATP. Involved in the biosynthesis of UDP-glucuronic acid (UDP-GlcA), providing nucleotide sugars for cell-wall polymers. May be also involved in a salvage pathway for glucuronic acid. This Arabidopsis thaliana (Mouse-ear cress) protein is Probable glucuronokinase 2 (GLCAK2).